A 48-amino-acid chain; its full sequence is Large ribosomal subunit protein bL33A (48 aa).

The protein belongs to the bacterial ribosomal protein bL33 family.

The sequence is that of Large ribosomal subunit protein bL33A from Bacillus anthracis.